A 194-amino-acid polypeptide reads, in one-letter code: Thioredoxin peroxidase (194 aa).

The Thioredoxin domain maps to 2–160 (LQPNMPAPNF…ALRLLDAFIF (159 aa)). Cys-47 functions as the Cysteine sulfenic acid (-SOH) intermediate in the catalytic mechanism.

It belongs to the peroxiredoxin family. AhpC/Prx1 subfamily. In terms of assembly, homodimer; disulfide-linked, upon oxidation.

The enzyme catalyses a hydroperoxide + [thioredoxin]-dithiol = an alcohol + [thioredoxin]-disulfide + H2O. In terms of biological role, antioxidant. Could be involved in protection against reactive oxygen species (ROS) generated by metabolic processes and/or protection of the parasite against ROS released by immune effector cells. Its function is as follows. Thiol-specific peroxidase that catalyzes the reduction of hydrogen peroxide and organic hydroperoxides to water and alcohols, respectively. Plays a role in cell protection against oxidative stress by detoxifying peroxides and as sensor of hydrogen peroxide-mediated signaling events. This is Thioredoxin peroxidase from Fasciola hepatica (Liver fluke).